The sequence spans 355 residues: S-adenosylmethionine:tRNA ribosyltransferase-isomerase (355 aa).

It belongs to the QueA family. As to quaternary structure, monomer.

The protein localises to the cytoplasm. It catalyses the reaction 7-aminomethyl-7-carbaguanosine(34) in tRNA + S-adenosyl-L-methionine = epoxyqueuosine(34) in tRNA + adenine + L-methionine + 2 H(+). Its pathway is tRNA modification; tRNA-queuosine biosynthesis. Transfers and isomerizes the ribose moiety from AdoMet to the 7-aminomethyl group of 7-deazaguanine (preQ1-tRNA) to give epoxyqueuosine (oQ-tRNA). The sequence is that of S-adenosylmethionine:tRNA ribosyltransferase-isomerase from Burkholderia lata (strain ATCC 17760 / DSM 23089 / LMG 22485 / NCIMB 9086 / R18194 / 383).